A 165-amino-acid chain; its full sequence is NADH-quinone oxidoreductase subunit I (165 aa).

2 4Fe-4S ferredoxin-type domains span residues 57 to 86 and 96 to 125; these read RRYENGEERCIACKLCEAVCPALAITIESE and TRYDIDLTKCIFCGFCEESCPVDSIVETHI. [4Fe-4S] cluster contacts are provided by Cys-66, Cys-69, Cys-72, Cys-76, Cys-105, Cys-108, Cys-111, and Cys-115.

The protein belongs to the complex I 23 kDa subunit family. In terms of assembly, NDH-1 is composed of 14 different subunits. Subunits NuoA, H, J, K, L, M, N constitute the membrane sector of the complex. [4Fe-4S] cluster serves as cofactor.

The protein localises to the cell inner membrane. It catalyses the reaction a quinone + NADH + 5 H(+)(in) = a quinol + NAD(+) + 4 H(+)(out). Its function is as follows. NDH-1 shuttles electrons from NADH, via FMN and iron-sulfur (Fe-S) centers, to quinones in the respiratory chain. The immediate electron acceptor for the enzyme in this species is believed to be ubiquinone. Couples the redox reaction to proton translocation (for every two electrons transferred, four hydrogen ions are translocated across the cytoplasmic membrane), and thus conserves the redox energy in a proton gradient. This is NADH-quinone oxidoreductase subunit I from Methylibium petroleiphilum (strain ATCC BAA-1232 / LMG 22953 / PM1).